The sequence spans 119 residues: Large ribosomal subunit protein bL12 (119 aa).

It belongs to the bacterial ribosomal protein bL12 family. In terms of assembly, homodimer. Part of the ribosomal stalk of the 50S ribosomal subunit. Forms a multimeric L10(L12)X complex, where L10 forms an elongated spine to which 2 to 4 L12 dimers bind in a sequential fashion. Binds GTP-bound translation factors.

Functionally, forms part of the ribosomal stalk which helps the ribosome interact with GTP-bound translation factors. Is thus essential for accurate translation. The polypeptide is Large ribosomal subunit protein bL12 (Colwellia psychrerythraea (strain 34H / ATCC BAA-681) (Vibrio psychroerythus)).